The sequence spans 321 residues: PI-PLC X domain-containing protein 3 (321 aa).

A PI-PLC X-box domain is found at 22–197; it reads SIHSIPLTNL…DYQVLVFYHS (176 aa). Catalysis depends on residues H37 and H114.

In Bos taurus (Bovine), this protein is PI-PLC X domain-containing protein 3 (PLCXD3).